A 294-amino-acid chain; its full sequence is Thymidylate synthase 1/2 (294 aa).

Residues R29 and 154 to 155 (RR) contribute to the dUMP site. C174 acts as the Nucleophile in catalysis. DUMP is bound by residues 194 to 197 (RSGD), N205, and 235 to 237 (HVY). D197 serves as a coordination point for (6R)-5,10-methylene-5,6,7,8-tetrahydrofolate.

This sequence belongs to the thymidylate synthase family.

The enzyme catalyses dUMP + (6R)-5,10-methylene-5,6,7,8-tetrahydrofolate = 7,8-dihydrofolate + dTMP. It functions in the pathway pyrimidine metabolism; dTTP biosynthesis. In Encephalitozoon cuniculi (strain GB-M1) (Microsporidian parasite), this protein is Thymidylate synthase 1/2 (TS-1).